The following is a 366-amino-acid chain: Type 2 DNA topoisomerase 6 subunit A (366 aa).

Positions 7-146 constitute a Topo IIA-type catalytic domain; sequence SDETEARDQL…FHMRPEESGA (140 aa). Y101 functions as the O-(5'-phospho-DNA)-tyrosine intermediate in the catalytic mechanism. Residues E199 and D251 each coordinate Mg(2+).

Belongs to the TOP6A family. As to quaternary structure, homodimer. Heterotetramer of two Top6A and two Top6B chains. The cofactor is Mg(2+).

It catalyses the reaction ATP-dependent breakage, passage and rejoining of double-stranded DNA.. In terms of biological role, relaxes both positive and negative superturns and exhibits a strong decatenase activity. This is Type 2 DNA topoisomerase 6 subunit A from Halobacterium salinarum (strain ATCC 700922 / JCM 11081 / NRC-1) (Halobacterium halobium).